The primary structure comprises 349 residues: Probable arabinogalactan endo-beta-1,4-galactanase A (349 aa).

An N-terminal signal peptide occupies residues 1–15 (MLLSFLPLLPLATAA). An N-linked (GlcNAc...) asparagine glycan is attached at Asn-126. Glu-150 (proton donor) is an active-site residue. Residue Glu-261 is the Nucleophile of the active site.

Belongs to the glycosyl hydrolase 53 family.

It localises to the secreted. The enzyme catalyses The enzyme specifically hydrolyzes (1-&gt;4)-beta-D-galactosidic linkages in type I arabinogalactans.. In terms of biological role, endogalactanase involved in the degradation of plant cell wall polysaccharides, and more particularly of hairy regions of pectin. In Aspergillus terreus (strain NIH 2624 / FGSC A1156), this protein is Probable arabinogalactan endo-beta-1,4-galactanase A (galA).